Consider the following 676-residue polypeptide: Capsid vertex component 1 (676 aa).

Over residues 253–264 (HPVRPSSSRVAS) the composition is skewed to low complexity. Residues 253–308 (HPVRPSSSRVASGLLQSAKGHGAQTSNTDPINNGSFDGVLEPPGQGRFTGKKNNSS) form a disordered region. Residues 275–287 (AQTSNTDPINNGS) are compositionally biased toward polar residues.

Belongs to the herpesviridae CVC1 protein family. As to quaternary structure, interacts (via C-terminus) with capsid vertex component 2/CVC2.

The protein localises to the virion. The protein resides in the host nucleus. Functionally, capsid vertex-specific component that plays a role during viral DNA encapsidation, assuring correct genome cleavage and presumably stabilizing capsids that contain full-length viral genomes. In Varicella-zoster virus (strain Dumas) (HHV-3), this protein is Capsid vertex component 1.